A 206-amino-acid chain; its full sequence is Large ribosomal subunit protein mL40 (206 aa).

Residues 1–46 constitute a mitochondrion transit peptide; sequence MATAAMLCAARALRPRSWIPGTCQAQVRHTHQRASLLSFWELIPMR. Positions 170–190 are disordered; the sequence is PFEKEGPHYTPPVPNYQAPEG.

This sequence belongs to the mitochondrion-specific ribosomal protein mL40 family. As to quaternary structure, component of the mitochondrial ribosome large subunit (39S) which comprises a 16S rRNA and about 50 distinct proteins.

It is found in the mitochondrion. The polypeptide is Large ribosomal subunit protein mL40 (Mrpl40) (Rattus norvegicus (Rat)).